The sequence spans 321 residues: Beta-porphyranase B (321 aa).

The signal sequence occupies residues 1-20 (MRKTVLYLSAASLFLSSYTL). Residues 31-319 (EHIKNLPEAP…WVRAYKLVPI (289 aa)) enclose the GH16 domain. Substrate contacts are provided by W72, R76, E173, E178, and E284. E173 acts as the Nucleophile in catalysis. E178 serves as the catalytic Proton donor.

Belongs to the glycosyl hydrolase 16 family.

The enzyme catalyses Hydrolysis of beta-D-galactopyranose-(1-&gt;4)-alpha-L-galactopyranose-6-sulfate linkages in porphyran.. Functionally, cleaves the sulfated polysaccharide porphyran at the (1-&gt;4) linkages between beta-D-galactopyranose and alpha-L-galactopyranose-6-sulfate, forming mostly the disaccharide alpha-L-galactopyranose-6-sulfate-(1-&gt;3)-beta-D-galactose. Some longer oligosaccharides of even number of residues are also observed. Inactive on the non-sulfated agarose portion of the porphyran backbone. This is Beta-porphyranase B from Phocaeicola plebeius (strain DSM 17135 / JCM 12973 / CCUG 54634 / M2) (Bacteroides plebeius).